The chain runs to 595 residues: Elongation factor 4 (595 aa).

In terms of domain architecture, tr-type G spans 2-184 (SHIRNFSIIA…RLVATIPAPT (183 aa)). GTP contacts are provided by residues 14 to 19 (DHGKST) and 131 to 134 (NKMD).

This sequence belongs to the TRAFAC class translation factor GTPase superfamily. Classic translation factor GTPase family. LepA subfamily.

The protein localises to the cell inner membrane. The enzyme catalyses GTP + H2O = GDP + phosphate + H(+). Functionally, required for accurate and efficient protein synthesis under certain stress conditions. May act as a fidelity factor of the translation reaction, by catalyzing a one-codon backward translocation of tRNAs on improperly translocated ribosomes. Back-translocation proceeds from a post-translocation (POST) complex to a pre-translocation (PRE) complex, thus giving elongation factor G a second chance to translocate the tRNAs correctly. Binds to ribosomes in a GTP-dependent manner. The sequence is that of Elongation factor 4 from Pseudomonas savastanoi pv. phaseolicola (strain 1448A / Race 6) (Pseudomonas syringae pv. phaseolicola (strain 1448A / Race 6)).